A 162-amino-acid chain; its full sequence is UPF0303 protein Arad_3071 (162 aa).

Belongs to the UPF0303 family.

This Rhizobium rhizogenes (strain K84 / ATCC BAA-868) (Agrobacterium radiobacter) protein is UPF0303 protein Arad_3071.